An 80-amino-acid chain; its full sequence is MKEQKWIHEGLITESLPNGMFRVRLDNVDNEDLILGYVSGRIRRSFIRILPGXRVKIEVSRXDSTRGRIIYRLRNKDSNB.

The region spanning 1–74 (MKEQKWIHEG…TRGRIIYRLR (74 aa)) is the S1-like domain.

It belongs to the IF-1 family. In terms of assembly, component of the 30S ribosomal translation pre-initiation complex which assembles on the 30S ribosome in the order IF-2 and IF-3, IF-1 and N-formylmethionyl-tRNA(fMet); mRNA recruitment can occur at any time during PIC assembly.

It localises to the plastid. The protein localises to the chloroplast. Its function is as follows. One of the essential components for the initiation of protein synthesis. Stabilizes the binding of IF-2 and IF-3 on the 30S subunit to which N-formylmethionyl-tRNA(fMet) subsequently binds. Helps modulate mRNA selection, yielding the 30S pre-initiation complex (PIC). Upon addition of the 50S ribosomal subunit IF-1, IF-2 and IF-3 are released leaving the mature 70S translation initiation complex. The polypeptide is Translation initiation factor IF-1, chloroplastic (Illicium parviflorum (Yellow anise tree)).